A 212-amino-acid polypeptide reads, in one-letter code: MPHPFDLSLYLVTDRRLTAERGLLETVEEAVAGGVTLVQLRDPEAKGRALAEEARALIGLLRPKGIPLIINDRVDVAAAVGAEGVHLGQDDLDPAAARAILGPDAIIGLSVGSLEELSASNLGPVDYVGCGPINATGTKGDAGGAIGIEGFAFLRSHIALPMVGIGGLKAEDAEAVMQAGANGIAVVSALCAAPDVTEAARTLKTIIETSRR.

4-amino-2-methyl-5-(diphosphooxymethyl)pyrimidine is bound by residues 39–41 and N71; that span reads QLR. Mg(2+) is bound by residues D72 and D91. 4-amino-2-methyl-5-(diphosphooxymethyl)pyrimidine is bound at residue S110. 136–138 serves as a coordination point for 2-[(2R,5Z)-2-carboxy-4-methylthiazol-5(2H)-ylidene]ethyl phosphate; the sequence is TGT. K139 provides a ligand contact to 4-amino-2-methyl-5-(diphosphooxymethyl)pyrimidine. Residues G167 and 187–188 each bind 2-[(2R,5Z)-2-carboxy-4-methylthiazol-5(2H)-ylidene]ethyl phosphate; that span reads VS.

This sequence belongs to the thiamine-phosphate synthase family. It depends on Mg(2+) as a cofactor.

It catalyses the reaction 2-[(2R,5Z)-2-carboxy-4-methylthiazol-5(2H)-ylidene]ethyl phosphate + 4-amino-2-methyl-5-(diphosphooxymethyl)pyrimidine + 2 H(+) = thiamine phosphate + CO2 + diphosphate. The enzyme catalyses 2-(2-carboxy-4-methylthiazol-5-yl)ethyl phosphate + 4-amino-2-methyl-5-(diphosphooxymethyl)pyrimidine + 2 H(+) = thiamine phosphate + CO2 + diphosphate. The catalysed reaction is 4-methyl-5-(2-phosphooxyethyl)-thiazole + 4-amino-2-methyl-5-(diphosphooxymethyl)pyrimidine + H(+) = thiamine phosphate + diphosphate. It functions in the pathway cofactor biosynthesis; thiamine diphosphate biosynthesis; thiamine phosphate from 4-amino-2-methyl-5-diphosphomethylpyrimidine and 4-methyl-5-(2-phosphoethyl)-thiazole: step 1/1. In terms of biological role, condenses 4-methyl-5-(beta-hydroxyethyl)thiazole monophosphate (THZ-P) and 2-methyl-4-amino-5-hydroxymethyl pyrimidine pyrophosphate (HMP-PP) to form thiamine monophosphate (TMP). This Azorhizobium caulinodans (strain ATCC 43989 / DSM 5975 / JCM 20966 / LMG 6465 / NBRC 14845 / NCIMB 13405 / ORS 571) protein is Thiamine-phosphate synthase.